The sequence spans 434 residues: Enolase 2 (434 aa).

Glutamine 171 is a binding site for (2R)-2-phosphoglycerate. Glutamate 213 functions as the Proton donor in the catalytic mechanism. Mg(2+) is bound by residues aspartate 250, glutamate 293, and aspartate 320. Residues lysine 345, arginine 374, serine 375, and lysine 396 each coordinate (2R)-2-phosphoglycerate. The active-site Proton acceptor is the lysine 345.

This sequence belongs to the enolase family. It depends on Mg(2+) as a cofactor.

The protein resides in the cytoplasm. It is found in the secreted. The protein localises to the cell surface. It carries out the reaction (2R)-2-phosphoglycerate = phosphoenolpyruvate + H2O. It functions in the pathway carbohydrate degradation; glycolysis; pyruvate from D-glyceraldehyde 3-phosphate: step 4/5. In terms of biological role, catalyzes the reversible conversion of 2-phosphoglycerate (2-PG) into phosphoenolpyruvate (PEP). It is essential for the degradation of carbohydrates via glycolysis. The protein is Enolase 2 of Streptomyces coelicolor (strain ATCC BAA-471 / A3(2) / M145).